Here is a 377-residue protein sequence, read N- to C-terminus: Spermidine/putrescine import ATP-binding protein PotA (377 aa).

The ABC transporter domain occupies 18–248 (IRLSGISKSF…PKNLFVARFI (231 aa)). Residue 50-57 (GPSGCGKT) coordinates ATP.

This sequence belongs to the ABC transporter superfamily. Spermidine/putrescine importer (TC 3.A.1.11.1) family. In terms of assembly, the complex is composed of two ATP-binding proteins (PotA), two transmembrane proteins (PotB and PotC) and a solute-binding protein (PotD).

The protein resides in the cell inner membrane. The enzyme catalyses ATP + H2O + polyamine-[polyamine-binding protein]Side 1 = ADP + phosphate + polyamineSide 2 + [polyamine-binding protein]Side 1.. Functionally, part of the ABC transporter complex PotABCD involved in spermidine/putrescine import. Responsible for energy coupling to the transport system. This chain is Spermidine/putrescine import ATP-binding protein PotA, found in Vibrio cholerae serotype O1 (strain ATCC 39315 / El Tor Inaba N16961).